The sequence spans 138 residues: Basic phospholipase A2 ammodytoxin A (138 aa).

A signal peptide spans 1–16; it reads MRTLWIVAVCLIGVEG. Cystine bridges form between cysteine 42–cysteine 131, cysteine 44–cysteine 60, cysteine 59–cysteine 111, cysteine 65–cysteine 138, cysteine 66–cysteine 104, cysteine 73–cysteine 97, and cysteine 91–cysteine 102. 3 residues coordinate Ca(2+): tyrosine 43, glycine 45, and glycine 47. The active site involves histidine 63. Residue aspartate 64 coordinates Ca(2+). Aspartate 105 is a catalytic residue.

It belongs to the phospholipase A2 family. Group II subfamily. D49 sub-subfamily. In terms of assembly, monomer. Binds to calmodulin, coagulation factor X (F10), M-type PLA2 receptor (R-180). May also bind to 14-3-3 proteins gamma (YWHAG) and epsilon (YWHAE), and R25, a mitochondrial membrane protein. Requires Ca(2+) as cofactor. In terms of tissue distribution, expressed by the venom gland.

It localises to the secreted. The protein localises to the host cytoplasm. The protein resides in the host cytosol. It carries out the reaction a 1,2-diacyl-sn-glycero-3-phosphocholine + H2O = a 1-acyl-sn-glycero-3-phosphocholine + a fatty acid + H(+). Functionally, snake venom phospholipase A2 (PLA2) that acts as a presynaptic neurotoxin, an inhibitor of blood coagulation, and has been found to bind with high affinity to intracellular proteins. The response of indirectly stimulated neuromuscular preparations to ammodytoxin (Atx) is triphasic. The first phase, the transient inhibition of the acetylcholine (ACh) release, starts soon after the addition of Atx and lasts for several minutes. This phase is probably independent of Atx enzymatic activity. The effect may be due to the specific binding of the toxin to presynaptic receptors. These receptors, called N-type receptors, are still unidentified. It is noteworthy that a neuronal isoform of the M-type PLA2 receptor (R180) has been identified as a high-affinity receptor for Atx in neuronal plasma membranes. It was demonstrated however that this receptor is not essential for expression of neurotoxicity by Atx. The second phase corresponds to an augmentation of neurotransmitter release. A peak is reached 10-20 minutes after exposure of the preparation to Atx and is followed by a gradual reduction. In this phase, the enzymatic activity of Atx of the mammalian is not significant. It is speculated that the increased release of neurotransmitter in this phase is induced by the interference of Atx with voltage-gated potassium channels. Measurements of ionic currents showed however that voltage-gated potassium channels are not affected by Atx. The third phase of the response of neuromuscular preparations to Atx, which corresponds to a complete and irreversible paralysis, is clearly dependent on the hydrolytic activity of the toxin. In addition to its presynaptic neurotoxicity, Atx shows an anticoagulant activity by binding with high affinity to activated coagulation factor X (F10) thus inhibiting the formation of the prothrombinase complex (FX/FV) and its activity (IC(50) is 20 nM). Surprisingly, Atx was discovered to bind intracellular proteins such as calmodulin (CaM) (IC(50) is 6 nM), 14-3-3 proteins gamma (YWHAG) and epsilon (YWHAE) (by similarity with AtxC), as well as R25 (by similarity with AtxC), a mitochondrial integral membrane protein found in cerebral cortex. These findings raised a doubt about the dogma of the exclusively extracellular action of PLA2s, defended by the potential instability of these molecules in the reducing environment of the eukaryotic cytosol coupled with their possible inability to act as enzymes in this cellular compartment, due to too low concentration of calcium ions. This hypothesis was challenged efficiently by demonstrating the internalization of AtxA into a culture cells, but still remains to be directly demonstrated in vivo. PLA2 catalyzes the calcium-dependent hydrolysis of the 2-acyl groups in 3-sn-phosphoglycerides. The polypeptide is Basic phospholipase A2 ammodytoxin A (Vipera ammodytes ammodytes (Western sand viper)).